The primary structure comprises 238 residues: MLHVTFFGHANFLLDDGQTKVLIDPFFTGNPVCPIKADAVSADYILVSHGHGDHLGDAIDIAKGTGATIISSFELASYCQRKGVKAHGMAIGGKRDFPFGRVRLTAAVHGSGIIEGDNYLDVGNPCGFLVNMGGKSVYHAGDTGLTRDMELINMCFLKGGRLDLALLPIGDNFGMGPEDALYATKMLHPRMIVPMHYNTFPVIEQDVAAFKRVVTELTDSECHVLAPGDTLTLNGHGR.

Belongs to the UPF0173 family.

This Heliobacterium modesticaldum (strain ATCC 51547 / Ice1) protein is UPF0173 metal-dependent hydrolase Helmi_16730.